The following is a 216-amino-acid chain: Pyridoxine/pyridoxamine 5'-phosphate oxidase (216 aa).

Residues 12-15 (RREY) and lysine 70 contribute to the substrate site. Residues 65-70 (RVVLLK), 80-81 (YT), arginine 86, lysine 87, and glutamine 109 contribute to the FMN site. Substrate-binding residues include tyrosine 127 and arginine 131. FMN is bound by residues 144–145 (QS) and tryptophan 189. 195–197 (RLH) lines the substrate pocket. Arginine 199 is a binding site for FMN.

It belongs to the pyridoxamine 5'-phosphate oxidase family. In terms of assembly, homodimer. FMN serves as cofactor.

The enzyme catalyses pyridoxamine 5'-phosphate + O2 + H2O = pyridoxal 5'-phosphate + H2O2 + NH4(+). The catalysed reaction is pyridoxine 5'-phosphate + O2 = pyridoxal 5'-phosphate + H2O2. It functions in the pathway cofactor metabolism; pyridoxal 5'-phosphate salvage; pyridoxal 5'-phosphate from pyridoxamine 5'-phosphate: step 1/1. The protein operates within cofactor metabolism; pyridoxal 5'-phosphate salvage; pyridoxal 5'-phosphate from pyridoxine 5'-phosphate: step 1/1. Its function is as follows. Catalyzes the oxidation of either pyridoxine 5'-phosphate (PNP) or pyridoxamine 5'-phosphate (PMP) into pyridoxal 5'-phosphate (PLP). In Blochmanniella pennsylvanica (strain BPEN), this protein is Pyridoxine/pyridoxamine 5'-phosphate oxidase.